Here is a 205-residue protein sequence, read N- to C-terminus: MAGVRAVQKEKTRRALVDAAFNQLSAEKSFSNLSLREVAREAGIAPTSFYRHFSDMDELGLEMVDEAGLMLRQLMRQARKRIDAGGSVISVSVDTFFEFITNSTNVFRLLLRESSGTSQAFRTAAAREIKHFVDELAEYISYKHQYSQYVAYVQAEGIVTIVFTAGANALDMSKAEREQLKARVILQLRMLAKGADFAANKERGK.

An HTH tetR-type domain is found at Lys11–Leu71.

This is an uncharacterized protein from Haemophilus influenzae (strain ATCC 51907 / DSM 11121 / KW20 / Rd).